Consider the following 1936-residue polypeptide: MEEKKKKKQEEKKKKEGAQKKAADQKTKVPEPTKTCSSQPQPAGTSTSTSTSTISSSNNGKRASASGQQPAASRYLPREVPPRFRQQEQKQLLKRGQPLPTGTLTSVSPTQGAGPAGVSPPPLPGAGTQHHPSKLQPDLSHSGLADHYENSHWGQQPTYRSEANCSWDKVIIDRTDKEAWPSITGTETESASECTTDTDSASNCGSENSSMATGSAQGNFTGHTKKTNGNNGTNGALVQSPSNQSALGAGGANSNGSAARVWGVATGSSSGLAHCSVSGGDGKMDTMIGDGRSQNCWGASNSNAGINLNLNPNANPAAWPVLGHEGTVATGNPSSICSPVSAIGQNMGNQNGNPTGTLGAWGNLLPQESTEPQTSTSQNVSFSAQPQNLNTDGPNNTNPMNSSPNPINAMQTNGLPNWGMAVGMGAIIPPHLQGLPGANGSSVSQVSGGSAEGISNSVWGLSPGNPATGNSNSGFSQGNGDTVNSALSAKQNGSSSAVQKEGSGGNAWDSGPPAGPGILAWGRGSGNNGVGNIHSGAWGHPSRSTSNGVNGEWGKPPNQHSNSDINGKGSTGWESPSVTSQNPTVQPGGEHMNSWAKAASSGTTASEGSSDGSGNHNEGSTGREGTGEGRRRDKGIIDQGHIQLPRNDLDPRVLSNTGWGQTPVKQNTAWEFEESPRSERKNDNGTEAWGCAATQASNSGGKNDGSIMNSTNTSSVSGWVNAPPAAVPANTGWGDSNNKAPSGPGVWGDSISSTAVSTAAAAKSGHAWSGAANQEDKSPTWGEPPKPKSQHWGDGQRSNPAWSAGGGDWADSSSVLGHLGDGKKNGSGWDADSNRSGSGWNDTTRSGNSGWGNSTNTKANPGTNWGETLKPGPQQNWASKPQDNNVSNWGGAASVKQTGTGWIGGPVPVKQKDSSEATGWEEPSPPSIRRKMEIDDGTSAWGDPSNYNNKTVNMWDRNNPVIQSSTTTNTTTTTTTTTSNTTHRVETPPPHQAGTQLNRSPLLGPVSSGWGEMPNVHSKTENSWGEPSSPSTLVDNGTAAWGKPPSSGSGWGDHPAEPPVAFGRAGAPVAASALCKPASKSMQEGWGSGGDEMNLSTSQWEDEEGDVWNNAASQESTSSCSSWGNAPKKGLQKGMKTSGKQDEAWIMSRLIKQLTDMGFPREPAEEALKSNNMNLDQAMSALLEKKVDVDKRGLGVTDHNGMAAKPLGCRPPISKESSVDRPTFLDKDGGLVEEPTPSPFLPSPSLKLPLSHSALPSQALGGIASGLGMQNLNSSRQIPSGNLGMFGNSGAAQARTMQQPPQPPVQPLNSSQPSLRAQVPQFLSPQVQAQLLQFAAKNIGLNPALLTSPINPQHMTMLNQLYQLQLAYQRLQIQQQMLQAQRNVSGSMRQQEQQVARTITNLQQQIQQHQRQLAQALLVKQPPPPPPPPHLSLHPSAGKSAMDSFPSHPQTPGLPDLQTKEQQSSPNTFAPYPLAGLNPNMNVNSMDMTGGLSVKDPSQSQSRLPQWTHPNSMDNLPSAASPLEQNPSKHGAIPGGLSIGPPGKSSIDDSYGRYDLIQNSESPASPPVAVPHSWSRAKSDSDKISNGSSINWPPEFHPGVPWKGLQNIDPENDPDVTPGSVPTGPTINTTIQDVNRYLLKSGGSSPPSSQNATLPSSSAWPLSASGYSSSFSSIASAPSVAGKLSDIKSTWSSGPTSHTQASLSHELWKVPRNSTAPTRPPPGLTNPKPSSTWGASPLGWTSSYSSGSAWSTDTSGRTSSWLVLRNLTPQIDGSTLRTLCLQHGPLITFHLNLTQGNAVVRYSSKEEAAKAQKSLHMCVLGNTTILAEFAGEEEVNRFLAQGQALPPTSSWQSSSASSQPRLSAAGSSHGLVRSDAGHWNAPCLGGKGSSELLWGGVPQYSSSLWGPPSADDSRVIGSPTPLTTLLPGDLLSGESL.

The span at 1 to 31 shows a compositional bias: basic and acidic residues; the sequence is MEEKKKKKQEEKKKKEGAQKKAADQKTKVPE. 6 disordered regions span residues 1–160, 181–256, 366–412, 439–931, 961–1063, and 1115–1139; these read MEEK…PTYR, PSIT…NSNG, PQES…AMQT, NGSS…IRRK, VIQS…VAFG, and ESTS…KTSG. Positions 34-44 are enriched in polar residues; the sequence is KTCSSQPQPAG. Positions 45–57 are enriched in low complexity; the sequence is TSTSTSTSTISSS. Residues 58–71 are compositionally biased toward polar residues; it reads NNGKRASASGQQPA. The span at 76-88 shows a compositional bias: basic and acidic residues; sequence LPREVPPRFRQQE. Polar residues-rich tracts occupy residues 100–111 and 183–217; these read PTGTLTSVSPTQ and ITGT…GSAQ. The tract at residues 211-1133 is sufficient for interaction with argonaute family proteins; it reads MATGSAQGNF…GNAPKKGLQK (923 aa). A compositionally biased stretch (low complexity) spans 218-235; it reads GNFTGHTKKTNGNNGTNG. The span at 366–393 shows a compositional bias: polar residues; the sequence is PQESTEPQTSTSQNVSFSAQPQNLNTDG. Composition is skewed to low complexity over residues 394–408, 439–453, and 469–480; these read PNNT…NPIN, NGSS…SAEG, and GNSNSGFSQGNG. Residues 481-498 show a composition bias toward polar residues; the sequence is DTVNSALSAKQNGSSSAV. The residue at position 523 (Arg523) is an Omega-N-methylarginine. Polar residues predominate over residues 572–585; sequence GWESPSVTSQNPTV. The span at 594–614 shows a compositional bias: low complexity; sequence SWAKAASSGTTASEGSSDGSG. Residues 625–636 are compositionally biased toward basic and acidic residues; the sequence is GTGEGRRRDKGI. The segment covering 654-669 has biased composition (polar residues); the sequence is LSNTGWGQTPVKQNTA. Positions 674–684 are enriched in basic and acidic residues; that stretch reads ESPRSERKNDN. Ser675 carries the post-translational modification Phosphoserine. Residues 694-718 show a composition bias toward polar residues; it reads TQASNSGGKNDGSIMNSTNTSSVSG. Composition is skewed to low complexity over residues 720 to 730 and 750 to 772; these read VNAPPAAVPAN and SISS…SGAA. Composition is skewed to polar residues over residues 834–866 and 873–888; these read NRSG…TNWG and PQQN…NVSN. The residue at position 924 (Ser924) is a Phosphoserine. Positions 964-982 are enriched in low complexity; sequence SSTTTNTTTTTTTTTSNTT. Position 987 is a phosphothreonine (Thr987). The span at 1021-1035 shows a compositional bias: polar residues; it reads ENSWGEPSSPSTLVD. In terms of domain architecture, UBA spans 1140–1185; it reads KQDEAWIMSRLIKQLTDMGFPREPAEEALKSNNMNLDQAMSALLEK. Ser1218 is modified (phosphoserine). Disordered regions lie at residues 1291 to 1312, 1419 to 1658, 1689 to 1732, and 1848 to 1869; these read AAQA…NSSQ, VKQP…PSSS, STWS…PSST, and TSSW…GSSH. A coiled-coil region spans residues 1388-1419; it reads MRQQEQQVARTITNLQQQIQQHQRQLAQALLV. The span at 1421-1430 shows a compositional bias: pro residues; sequence QPPPPPPPPH. A silencing domain; interaction with CNOT1 and PAN3 region spans residues 1467–1936; the sequence is NTFAPYPLAG…PGDLLSGESL (470 aa). Residues 1496–1515 show a composition bias toward polar residues; the sequence is DPSQSQSRLPQWTHPNSMDN. The interval 1578 to 1624 is required for interaction with PABPC1; that stretch reads KSDSDKISNGSSINWPPEFHPGVPWKGLQNIDPENDPDVTPGSVPTG. Residues 1578-1936 are sufficient for translational repression when tethered to a target mRNA; the sequence is KSDSDKISNG…PGDLLSGESL (359 aa). A PABPC1-interacting motif-2 (PAM2) region spans residues 1588–1606; sequence SSINWPPEFHPGVPWKGLQ. A compositionally biased stretch (polar residues) spans 1623-1633; it reads TGPTINTTIQD. The span at 1641–1658 shows a compositional bias: low complexity; the sequence is SGGSSPPSSQNATLPSSS. Polar residues predominate over residues 1689-1703; it reads STWSSGPTSHTQASL. Residues 1811–1878 form the RRM domain; sequence AQKSLHMCVL…HGLVRSDAGH (68 aa). Residues 1842–1936 are interaction with the CCR4-NOT complex; it reads GQALPPTSSW…PGDLLSGESL (95 aa). Residues 1848–1865 are compositionally biased toward low complexity; it reads TSSWQSSSASSQPRLSAA.

It belongs to the GW182 family. As to quaternary structure, interacts with one or more of the argonaute family proteins AGO1, AGO2, AGO3 and AGO4. Interacts with PABPC1 and EIF4G1. Interacts with CNOT1; the interaction is direct and mediates the association with the CCR4-NOT complex. Interacts with PAN3; the interaction mediates the association with the PAN complex.

Its function is as follows. Plays a role in RNA-mediated gene silencing by micro-RNAs (miRNAs). Required for miRNA-dependent translational repression of complementary mRNAs by argonaute family proteins. As scaffoldng protein associates with argonaute proteins bound to partially complementary mRNAs and simultaneously can recruit CCR4-NOT and PAN deadenylase complexes. The sequence is that of Trinucleotide repeat-containing gene 6C protein (TNRC6C) from Homo sapiens (Human).